We begin with the raw amino-acid sequence, 183 residues long: Peptide deformylase (183 aa).

Fe cation is bound by residues Cys110 and His153. Glu154 is a catalytic residue. Residue His157 participates in Fe cation binding.

The protein belongs to the polypeptide deformylase family. Requires Fe(2+) as cofactor.

The catalysed reaction is N-terminal N-formyl-L-methionyl-[peptide] + H2O = N-terminal L-methionyl-[peptide] + formate. Its function is as follows. Removes the formyl group from the N-terminal Met of newly synthesized proteins. Requires at least a dipeptide for an efficient rate of reaction. N-terminal L-methionine is a prerequisite for activity but the enzyme has broad specificity at other positions. The polypeptide is Peptide deformylase (Listeria monocytogenes serotype 4b (strain CLIP80459)).